A 487-amino-acid chain; its full sequence is MKYKDLRDFIAKLEAEGELKRITVEVDPYLEMTEICDRVLHAGGPALLFERPKGASMPVLGNLFGTPRRVAQGMGEDSVAALREVGKLLAFLKEPDPPRGMKEAWRALPIFKKVLDMAPKIVRSAPCQEVILEGSQVDLSQIPIQTCWPGDIAPLITWGLVVTKGPYKERQNMGIYRQQVLGPNRVIMRWLAHRGGALDFQAWQQAHPGKPFPIAVALGADPATILGAVTPVPDTLSEYAFAGLLRGSKTELTRCLGSGLQVPASAEIVLEGYLKPGDEANEGPFGDHTGYYNEVEKFPVFTIERLTHRRHPIYHSTYTGRPPDEPAVLGVALNEVFIPILQKQFPEIVDFYLPPEGCSYRLAVVTMRKQYPGHAKRVMLGVWSFLRQFMYTKFVIVTDEDINARDWKDVIWAMTTRMDPARDCVIIENTPIDYLDFASPVSGLGSKIGFDVTHKWKGETQREWGQPITMDNAVKKRVDEMWDGMGL.

Asn172 is a Mn(2+) binding site. Residues Ile175–Arg177, Arg189–Leu191, and Arg194–Gly195 each bind prenylated FMN. Residue Glu238 coordinates Mn(2+). The active-site Proton donor is Asp287.

This sequence belongs to the UbiD family. In terms of assembly, homohexamer. Prenylated FMN is required as a cofactor. Requires Mn(2+) as cofactor.

The protein resides in the cell membrane. The enzyme catalyses a 4-hydroxy-3-(all-trans-polyprenyl)benzoate + H(+) = a 2-(all-trans-polyprenyl)phenol + CO2. Its pathway is cofactor biosynthesis; ubiquinone biosynthesis. In terms of biological role, catalyzes the decarboxylation of 3-octaprenyl-4-hydroxy benzoate to 2-octaprenylphenol, an intermediate step in ubiquinone biosynthesis. This Nitrosococcus oceani (strain ATCC 19707 / BCRC 17464 / JCM 30415 / NCIMB 11848 / C-107) protein is 3-octaprenyl-4-hydroxybenzoate carboxy-lyase.